Reading from the N-terminus, the 253-residue chain is Sporulated oocyst TA4 antigen (253 aa).

The first 23 residues, Met1 to Ala23, serve as a signal peptide directing secretion. Residues Arg182–Leu184 constitute a propeptide, removed in mature form.

As to quaternary structure, the TA4 antigen is composed of a 17 kDa and a 8 kDa chain, linked by a disulfide bond.

The chain is Sporulated oocyst TA4 antigen from Eimeria tenella (Coccidian parasite).